The chain runs to 308 residues: Mycothiol acetyltransferase (308 aa).

The interval 1–20 is disordered; the sequence is MTSDDTAQPSGARRIETRPD. N-acetyltransferase domains follow at residues 15–152 and 165–308; these read IETR…RSLT and VTVR…RSET. Residue E47 participates in 1D-myo-inositol 2-(L-cysteinylamino)-2-deoxy-alpha-D-glucopyranoside binding. 91–93 is a binding site for acetyl-CoA; the sequence is LVV. Residues E192, K231, and E240 each coordinate 1D-myo-inositol 2-(L-cysteinylamino)-2-deoxy-alpha-D-glucopyranoside. Residues 244–246 and 251–257 contribute to the acetyl-CoA site; these read VGV and QGGGLGK. Y278 contacts 1D-myo-inositol 2-(L-cysteinylamino)-2-deoxy-alpha-D-glucopyranoside.

Belongs to the acetyltransferase family. MshD subfamily. In terms of assembly, monomer.

It catalyses the reaction 1D-myo-inositol 2-(L-cysteinylamino)-2-deoxy-alpha-D-glucopyranoside + acetyl-CoA = mycothiol + CoA + H(+). Catalyzes the transfer of acetyl from acetyl-CoA to desacetylmycothiol (Cys-GlcN-Ins) to form mycothiol. The polypeptide is Mycothiol acetyltransferase (Streptomyces scabiei (strain 87.22)).